We begin with the raw amino-acid sequence, 108 residues long: Cell wall protein PGA48 (108 aa).

An N-terminal signal peptide occupies residues 1–17; sequence MFKFVIYLFTFIAFANA. N-linked (GlcNAc...) asparagine glycosylation is found at Asn-18, Asn-41, and Asn-77. Residue Asn-84 is the site of GPI-anchor amidated asparagine attachment. The propeptide at 85–108 is removed in mature form; the sequence is GASKLNLRSLAGAGLVAAIFIAFI.

The protein belongs to the SED1 family. Post-translationally, the GPI-anchor is attached to the protein in the endoplasmic reticulum and serves to target the protein to the cell surface. There, the glucosamine-inositol phospholipid moiety is cleaved off and the GPI-modified mannoprotein is covalently attached via its lipidless GPI glycan remnant to the 1,6-beta-glucan of the outer cell wall layer.

The protein resides in the secreted. The protein localises to the cell wall. It is found in the membrane. Functionally, cell wall protein that plays a role in adaptation and resistance to cell wall stress. The polypeptide is Cell wall protein PGA48 (PGA48) (Candida albicans (strain SC5314 / ATCC MYA-2876) (Yeast)).